The chain runs to 136 residues: Large ribosomal subunit protein uL16 (136 aa).

The protein belongs to the universal ribosomal protein uL16 family. Part of the 50S ribosomal subunit.

Binds 23S rRNA and is also seen to make contacts with the A and possibly P site tRNAs. This Rickettsia rickettsii (strain Iowa) protein is Large ribosomal subunit protein uL16.